We begin with the raw amino-acid sequence, 575 residues long: GBF-interacting protein 1-like (575 aa).

Disordered regions lie at residues 66 to 171 (SKRE…SKSD) and 229 to 296 (SSSN…VVHS). Composition is skewed to polar residues over residues 90–102 (FASS…SGRN), 115–138 (TRGS…NETK), and 161–171 (ISASRCSSKSD). A compositionally biased stretch (basic and acidic residues) spans 268-281 (AREETSTVSEDKDY).

It belongs to the GIP1 family. As to expression, expressed in roots, leaves, stems and flowers.

It is found in the nucleus. May act as a transcriptional coactivator of LOB domain-containing proteins. This Arabidopsis thaliana (Mouse-ear cress) protein is GBF-interacting protein 1-like.